Here is a 198-residue protein sequence, read N- to C-terminus: ATP-dependent Clp protease proteolytic subunit (198 aa).

Catalysis depends on S102, which acts as the Nucleophile. H127 is a catalytic residue.

The protein belongs to the peptidase S14 family. As to quaternary structure, fourteen ClpP subunits assemble into 2 heptameric rings which stack back to back to give a disk-like structure with a central cavity, resembling the structure of eukaryotic proteasomes.

Its subcellular location is the cytoplasm. It catalyses the reaction Hydrolysis of proteins to small peptides in the presence of ATP and magnesium. alpha-casein is the usual test substrate. In the absence of ATP, only oligopeptides shorter than five residues are hydrolyzed (such as succinyl-Leu-Tyr-|-NHMec, and Leu-Tyr-Leu-|-Tyr-Trp, in which cleavage of the -Tyr-|-Leu- and -Tyr-|-Trp bonds also occurs).. Cleaves peptides in various proteins in a process that requires ATP hydrolysis. Has a chymotrypsin-like activity. Plays a major role in the degradation of misfolded proteins. The polypeptide is ATP-dependent Clp protease proteolytic subunit (Brachyspira hyodysenteriae (strain ATCC 49526 / WA1)).